A 147-amino-acid chain; its full sequence is Putative pre-16S rRNA nuclease (147 aa).

Belongs to the YqgF nuclease family.

Its subcellular location is the cytoplasm. Its function is as follows. Could be a nuclease involved in processing of the 5'-end of pre-16S rRNA. The sequence is that of Putative pre-16S rRNA nuclease from Acinetobacter baylyi (strain ATCC 33305 / BD413 / ADP1).